A 307-amino-acid polypeptide reads, in one-letter code: Glutathione synthetase (307 aa).

An ATP-grasp domain is found at 120–304 (KLGALRYSHL…VSDKVIEKLL (185 aa)). Residue 146–202 (AQINHDVVVKPLGGKGGQGVIRLTKDSPGIKAMIELITSQEQLPVMMQKFIPEVKEG) participates in ATP binding. The Mg(2+) site is built by glutamate 275 and asparagine 277.

It belongs to the prokaryotic GSH synthase family. Mg(2+) serves as cofactor. Mn(2+) is required as a cofactor.

The catalysed reaction is gamma-L-glutamyl-L-cysteine + glycine + ATP = glutathione + ADP + phosphate + H(+). Its pathway is sulfur metabolism; glutathione biosynthesis; glutathione from L-cysteine and L-glutamate: step 2/2. The sequence is that of Glutathione synthetase from Prochlorococcus marinus subsp. pastoris (strain CCMP1986 / NIES-2087 / MED4).